A 483-amino-acid chain; its full sequence is Regulatory protein ViaA (483 aa).

The protein belongs to the ViaA family. In terms of assembly, homodimer. Interacts with RavA.

It is found in the cytoplasm. Functionally, component of the RavA-ViaA chaperone complex, which may act on the membrane to optimize the function of some of the respiratory chains. ViaA stimulates the ATPase activity of RavA. The sequence is that of Regulatory protein ViaA from Shigella sonnei (strain Ss046).